The sequence spans 1058 residues: Carbamoyl phosphate synthase large chain (1058 aa).

The interval 1–401 (MPKRKDIQKI…SLLKACRSLE (401 aa)) is carboxyphosphate synthetic domain. ATP is bound by residues Arg129, Arg169, Gly175, Gly176, Arg208, Ile210, Glu215, Gly241, Ile242, His243, Gln284, and Glu298. Residues 133-327 (KQLMQELDQP…IAKLAAKIAV (195 aa)) form the ATP-grasp 1 domain. Positions 284, 298, and 300 each coordinate Mg(2+). The Mn(2+) site is built by Gln284, Glu298, and Asn300. The interval 402–546 (IGVCHNEMTS…YSTYELENES (145 aa)) is oligomerization domain. The segment at 547–929 (VQSNKESILV…ALYKAFEANN (383 aa)) is carbamoyl phosphate synthetic domain. The ATP-grasp 2 domain occupies 671 to 861 (EKALKELGIP…MAQIATKLIL (191 aa)). Arg707, Ser746, Ile748, Glu752, Gly777, Val778, His779, Ser780, Gln820, and Glu832 together coordinate ATP. Mg(2+) contacts are provided by Gln820, Glu832, and Asn834. Mn(2+) contacts are provided by Gln820, Glu832, and Asn834. Residues 930 to 1058 (SHLSEFGQIV…ESRCFNIEAI (129 aa)) enclose the MGS-like domain. The segment at 930 to 1058 (SHLSEFGQIV…ESRCFNIEAI (129 aa)) is allosteric domain.

It belongs to the CarB family. In terms of assembly, composed of two chains; the small (or glutamine) chain promotes the hydrolysis of glutamine to ammonia, which is used by the large (or ammonia) chain to synthesize carbamoyl phosphate. Tetramer of heterodimers (alpha,beta)4. Mg(2+) is required as a cofactor. Mn(2+) serves as cofactor.

The enzyme catalyses hydrogencarbonate + L-glutamine + 2 ATP + H2O = carbamoyl phosphate + L-glutamate + 2 ADP + phosphate + 2 H(+). The catalysed reaction is hydrogencarbonate + NH4(+) + 2 ATP = carbamoyl phosphate + 2 ADP + phosphate + 2 H(+). It participates in amino-acid biosynthesis; L-arginine biosynthesis; carbamoyl phosphate from bicarbonate: step 1/1. It functions in the pathway pyrimidine metabolism; UMP biosynthesis via de novo pathway; (S)-dihydroorotate from bicarbonate: step 1/3. Large subunit of the glutamine-dependent carbamoyl phosphate synthetase (CPSase). CPSase catalyzes the formation of carbamoyl phosphate from the ammonia moiety of glutamine, carbonate, and phosphate donated by ATP, constituting the first step of 2 biosynthetic pathways, one leading to arginine and/or urea and the other to pyrimidine nucleotides. The large subunit (synthetase) binds the substrates ammonia (free or transferred from glutamine from the small subunit), hydrogencarbonate and ATP and carries out an ATP-coupled ligase reaction, activating hydrogencarbonate by forming carboxy phosphate which reacts with ammonia to form carbamoyl phosphate. The protein is Carbamoyl phosphate synthase large chain of Streptococcus pyogenes serotype M3 (strain SSI-1).